A 389-amino-acid chain; its full sequence is NADH-quinone oxidoreductase subunit D (389 aa).

Belongs to the complex I 49 kDa subunit family. NDH-1 is composed of 14 different subunits. Subunits NuoB, C, D, E, F, and G constitute the peripheral sector of the complex.

Its subcellular location is the cell inner membrane. The enzyme catalyses a quinone + NADH + 5 H(+)(in) = a quinol + NAD(+) + 4 H(+)(out). Its function is as follows. NDH-1 shuttles electrons from NADH, via FMN and iron-sulfur (Fe-S) centers, to quinones in the respiratory chain. The immediate electron acceptor for the enzyme in this species is believed to be ubiquinone. Couples the redox reaction to proton translocation (for every two electrons transferred, four hydrogen ions are translocated across the cytoplasmic membrane), and thus conserves the redox energy in a proton gradient. This is NADH-quinone oxidoreductase subunit D from Rickettsia typhi (strain ATCC VR-144 / Wilmington).